Here is a 1217-residue protein sequence, read N- to C-terminus: Disease resistance protein RPS4 (1217 aa).

Residues 14–175 (PQHQVFINFR…EIVKAVKTAL (162 aa)) form the TIR domain. E88 is an active-site residue. The region spanning 211–472 (EQRLKDLEEK…FRSQDKDYVE (262 aa)) is the NB-ARC domain. 11 LRR repeats span residues 260-285 (HALIDQIRVKSKHLELDRLPQMLLGE), 436-459 (PNIVSVFQVSYDELTTAQKDAFLD), 614-636 (LKEVRCLHWLKFPLETLPNDFNP), 637-659 (INLVDLKLPYSEMEQLWEGDKDT), 682-706 (AEKLQRLNLEGCTTLKAFPHDMKKM), 708-728 (MLAFLNLKGCTSLESLPEMNL), 729-749 (ISLKTLTLSGCSTFKEFPLIS), 750-774 (DNIETLYLDGTAISQLPMNMEKLQR), 796-818 (LKALQELILSDCLNLKIFPEIDI), 819-842 (SFLNILLLDGTAIEVMPQLPSVQY), and 861-887 (LSQLKWLDLKYCTSLTSVPEFPPNLQC). The disordered stretch occupies residues 1162–1195 (TEGVDGRVKKKKKTRMDNGRPKKKQRSGRDDNQT). Positions 1170–1177 (KKKKKTRM) match the Nuclear localization signal motif.

As to quaternary structure, interacts with EDS1.

It is found in the nucleus. The enzyme catalyses NAD(+) + H2O = ADP-D-ribose + nicotinamide + H(+). In terms of biological role, disease resistance (R) protein that specifically recognizes the AvrRps4 type III effector avirulence protein from Pseudomonas syringae. Resistance proteins guard the plant against pathogens that contain an appropriate avirulence protein via an indirect interaction with this avirulence protein. That triggers a defense system including the hypersensitive response, which restricts the pathogen growth. The combined presence of both regular and alternative RPS4 transcripts with truncated open reading frames (ORFs) is necessary for function. RPS4 function is regulated at multiple levels, including gene expression, alternative splicing, and protein stability. Acts as a disease resistance protein involved in resistance to fungal and bacterial pathogens, including R.solanacearum, P.syringae pv. tomato and C.higginsianum. In presence of RRS1, elicites an EDS1-dependent hypersensitive response. The polypeptide is Disease resistance protein RPS4 (Arabidopsis thaliana (Mouse-ear cress)).